Here is a 148-residue protein sequence, read N- to C-terminus: UPF0260 protein Spro_2751 (148 aa).

This sequence belongs to the UPF0260 family.

The polypeptide is UPF0260 protein Spro_2751 (Serratia proteamaculans (strain 568)).